The chain runs to 89 residues: uncharacterized protein (89 aa).

This is an uncharacterized protein from Bacillus subtilis (strain 168).